The primary structure comprises 470 residues: Neuraminidase (470 aa).

The Intravirion portion of the chain corresponds to 1–14; the sequence is MNPNQKIITIGSVS. The tract at residues 11–32 is involved in apical transport and lipid raft association; sequence GSVSLGLVVLNILLHIVSITIT. The helical transmembrane segment at 15–35 threads the bilayer; that stretch reads LGLVVLNILLHIVSITITVLV. Residues 32-86 are hypervariable stalk region; it reads TVLVLPGNGNNGSCNETVIREYNETVRIEKVTQWHNTNVIEYIERPESDHFMNNT. Topologically, residues 36 to 470 are virion surface; it reads LPGNGNNGSC…AILPFDIDKM (435 aa). N-linked (GlcNAc...) asparagine; by host glycosylation is found at Asn-42, Asn-46, Asn-54, and Asn-84. The segment at 89–470 is head of neuraminidase; it reads LCDVKGFAPF…AILPFDIDKM (382 aa). 8 cysteine pairs are disulfide-bonded: Cys-90-Cys-417, Cys-122-Cys-127, Cys-182-Cys-229, Cys-231-Cys-236, Cys-277-Cys-290, Cys-279-Cys-288, Cys-316-Cys-335, and Cys-421-Cys-446. Substrate is bound at residue Arg-116. A glycan (N-linked (GlcNAc...) asparagine; by host) is linked at Asn-144. Catalysis depends on Asp-149, which acts as the Proton donor/acceptor. Substrate is bound at residue Arg-150. Substrate is bound at residue 275–276; the sequence is EE. Substrate is bound at residue Arg-291. Position 292 (Asp-292) interacts with Ca(2+). An N-linked (GlcNAc...) asparagine; by host glycan is attached at Asn-293. Residues Gly-296 and Asp-322 each coordinate Ca(2+). Arg-368 provides a ligand contact to substrate. Asn-398 carries an N-linked (GlcNAc...) asparagine; by host glycan. The Nucleophile role is filled by Tyr-402.

It belongs to the glycosyl hydrolase 34 family. In terms of assembly, homotetramer. Requires Ca(2+) as cofactor. In terms of processing, N-glycosylated.

It localises to the virion membrane. The protein localises to the host apical cell membrane. It catalyses the reaction Hydrolysis of alpha-(2-&gt;3)-, alpha-(2-&gt;6)-, alpha-(2-&gt;8)- glycosidic linkages of terminal sialic acid residues in oligosaccharides, glycoproteins, glycolipids, colominic acid and synthetic substrates.. Its activity is regulated as follows. Inhibited by the neuraminidase inhibitors zanamivir (Relenza) and oseltamivir (Tamiflu). These drugs interfere with the release of progeny virus from infected cells and are effective against all influenza strains. Resistance to neuraminidase inhibitors is quite rare. Its function is as follows. Catalyzes the removal of terminal sialic acid residues from viral and cellular glycoconjugates. Cleaves off the terminal sialic acids on the glycosylated HA during virus budding to facilitate virus release. Additionally helps virus spread through the circulation by further removing sialic acids from the cell surface. These cleavages prevent self-aggregation and ensure the efficient spread of the progeny virus from cell to cell. Otherwise, infection would be limited to one round of replication. Described as a receptor-destroying enzyme because it cleaves a terminal sialic acid from the cellular receptors. May facilitate viral invasion of the upper airways by cleaving the sialic acid moieties on the mucin of the airway epithelial cells. Likely to plays a role in the budding process through its association with lipid rafts during intracellular transport. May additionally display a raft-association independent effect on budding. Plays a role in the determination of host range restriction on replication and virulence. Sialidase activity in late endosome/lysosome traffic seems to enhance virus replication. This chain is Neuraminidase, found in Aves (Horse).